We begin with the raw amino-acid sequence, 1453 residues long: Collagen alpha-1(I) chain (1453 aa).

The first 22 residues, 1–22, serve as a signal peptide directing secretion; it reads MFSFVDLRLLLLLGATALLTHG. Residues 23–151 constitute a propeptide, N-terminal propeptide; the sequence is QEDIPEVSCI…PPGLGGNFAS (129 aa). The 59-residue stretch at 29-87 folds into the VWFC domain; the sequence is VSCIHNGLRVPNGETWKPDVCLICICHNGTAVCDGVLCKEDLDCPNPQKREGECCPFCP. N-linked (GlcNAc...) asparagine glycosylation occurs at Asn-56. Residues 97–1206 form a disordered region; the sequence is VIGVEGPKGD…KSQDGGRYYR (1110 aa). Composition is skewed to pro residues over residues 109-118 and 128-143; these read PQGPRGPVGP and PGLP…PGPP. Gln-152 carries the pyrrolidone carboxylic acid modification. The tract at residues 152-167 is nonhelical region (N-terminal); sequence QMSYGYDEKSAGVSVP. Lys-160 is subject to Allysine. Ser-161 carries the post-translational modification Phosphoserine. Residues 168-1181 form a triple-helical region region; the sequence is GPMGPSGPRG…PGPPGPPGPP (1014 aa). Residues Pro-179, Pro-182, Pro-185, Pro-194, Pro-197, Pro-200, Pro-215, Pro-230, Pro-236, Pro-245, and Pro-251 each carry the 4-hydroxyproline modification. The span at 187 to 206 shows a compositional bias: low complexity; sequence PQGFQGPPGEPGEPGASGPM. Residues 218–232 show a composition bias toward basic and acidic residues; that stretch reads NGDDGEAGKPGRPGE. Residue Lys-254 is modified to 5-hydroxylysine; alternate. An O-linked (Gal...) hydroxylysine; alternate glycan is attached at Lys-254. At Ser-260 the chain carries Phosphoserine. A 4-hydroxyproline mark is found at Pro-278, Pro-281, Pro-287, Pro-296, and Pro-302. Residues 307–320 are compositionally biased toward low complexity; sequence SAGARGNDGAVGAA. Residues 322–334 are compositionally biased toward pro residues; sequence PPGPTGPTGPPGF. 4-hydroxyproline occurs at positions 323, 332, 335, 362, 365, 377, 383, 392, 398, 401, and 416. Over residues 335-361 the composition is skewed to low complexity; that stretch reads PGAAGAKGEAGPQGARGSEGPQGVRGE. Over residues 368–418 the composition is skewed to low complexity; that stretch reads AGAAGPAGNPGADGQPGAKGANGAPGIAGAPGFPGARGPSGPQGPSGAPGP. 5-hydroxylysine is present on Lys-419. Pro-425, Pro-428, Pro-440, Pro-449, Pro-464, Pro-470, Pro-479, and Pro-485 each carry 4-hydroxyproline. Over residues 474–483 the composition is skewed to gly residues; it reads GERGGPGSRG. Lys-494 is subject to 5-hydroxylysine. Residues Pro-503, Pro-512, Pro-518, Pro-524, Pro-533, Pro-536, Pro-545, Pro-554, Pro-560, Pro-572, Pro-581, Pro-590, Pro-593, Pro-611, Pro-629, Pro-635, Pro-641, Pro-647, Pro-653, Pro-659, Pro-671, Pro-680, Pro-692, Pro-704, Pro-707, Pro-713, Pro-719, and Pro-728 each carry the 4-hydroxyproline modification. The segment covering 527–566 has biased composition (low complexity); it reads KGLTGSPGSPGPDGKTGPPGPAGQDGRPGPAGPPGARGQA. The span at 623–650 shows a compositional bias: low complexity; sequence QGPAGSPGFQGLPGPAGPPGEAGKPGEQ. Composition is skewed to low complexity over residues 685 to 695 and 703 to 716; these read PRGNNGAPGND and APGA…PGLQ. The Cell attachment site signature appears at 734 to 736; it reads RGD. The residue at position 740 (Lys-740) is a 5-hydroxylysine. Pro-746, Pro-761, and Pro-767 each carry 4-hydroxyproline. A compositionally biased stretch (low complexity) spans 773–787; that stretch reads TGPSGPAGPTGARGA. Ser-776 carries the post-translational modification Phosphoserine. A 4-hydroxyproline mark is found at Pro-788, Pro-794, Pro-797, Pro-806, Pro-812, Pro-830, Pro-839, and Pro-848. The segment covering 800–815 has biased composition (low complexity); it reads AGFAGPPGADGQPGAK. A compositionally biased stretch (pro residues) spans 829 to 841; it reads PPGPAGPAGPPGP. Low complexity predominate over residues 842-872; it reads IGNVGAPGPKGSRGAAGPPGATGFPGAAGRV. Lys-851 carries the 5-hydroxylysine modification. 2 positions are modified to 4-hydroxyproline: Pro-860 and Pro-866. Pro-874 is modified (3-hydroxyproline). A 4-hydroxyproline mark is found at Pro-875, Pro-884, Pro-887, Pro-908, Pro-917, Pro-926, Pro-935, Pro-953, Pro-962, Pro-965, Pro-971, Pro-986, Pro-992, Pro-998, Pro-1007, and Pro-1013. Residues 901–910 show a composition bias toward low complexity; sequence ETGPAGRPGE. Over residues 920-935 the composition is skewed to low complexity; sequence AGEKGSPGADGPAGSP. Pro residues predominate over residues 985-995; the sequence is PPGPMGPPGLA. Positions 997-1012 are enriched in low complexity; sequence PPGESGREGSPGAEGS. The residue at position 1022 (Lys-1022) is a 5-hydroxylysine. A compositionally biased stretch (pro residues) spans 1031–1046; sequence AGPPGAPGAPGAPGPV. A 4-hydroxyproline mark is found at Pro-1034, Pro-1037, and Pro-1040. Low complexity predominate over residues 1067–1081; that stretch reads IGPAGARGPAGPQGP. A Cell attachment site motif is present at residues 1082 to 1084; that stretch reads RGD. Residues 1082-1096 are compositionally biased toward basic and acidic residues; that stretch reads RGDKGETGEQGDRGI. Lys-1085 bears the 5-hydroxylysine mark. Position 1097 is a 5-hydroxylysine; alternate (Lys-1097). Lys-1097 is a glycosylation site (O-linked (Gal...) hydroxylysine; alternate). A compositionally biased stretch (low complexity) spans 1102–1148; the sequence is FSGLQGPPGSPGSPGEQGPSGASGPAGPRGPPGSAGSPGKDGLNGLP. 5 positions are modified to 4-hydroxyproline: Pro-1109, Pro-1112, Pro-1115, Pro-1133, and Pro-1148. Pro-1153 is modified (3-hydroxyproline). 4-hydroxyproline is present on Pro-1154. Pro residues predominate over residues 1166 to 1181; sequence AGPPGPPGPPGPPGPP. Pro-1168 carries the post-translational modification 3-hydroxyproline. The residue at position 1169 (Pro-1169) is a 4-hydroxyproline. Pro-1171 carries the 3-hydroxyproline modification. Pro-1172 is subject to 4-hydroxyproline. The residue at position 1174 (Pro-1174) is a 3-hydroxyproline. 4-hydroxyproline is present on residues Pro-1175, Pro-1178, and Pro-1181. Residues 1176-1186 form a major antigenic determinant (of neutral salt-extracted rat skin collagen) region; it reads GPPGPPSGGYD. The interval 1182 to 1207 is nonhelical region (C-terminal); it reads SGGYDFSFLPQPPQEKSQDGGRYYRA. Residue Lys-1197 is modified to Allysine. Residues 1197–1206 are compositionally biased toward basic and acidic residues; the sequence is KSQDGGRYYR. Residues 1208-1453 constitute a propeptide, C-terminal propeptide; the sequence is DDANVVRDRD…GMDIGPACFV (246 aa). The region spanning 1218–1453 is the Fibrillar collagen NC1 domain; the sequence is LEVDTTLKSL…GMDIGPACFV (236 aa). Cystine bridges form between Cys-1248–Cys-1280, Cys-1288–Cys-1451, and Cys-1359–Cys-1404. Positions 1266, 1268, 1269, 1271, and 1274 each coordinate Ca(2+). Residue Asn-1354 is glycosylated (N-linked (GlcNAc...) asparagine).

Belongs to the fibrillar collagen family. As to quaternary structure, trimers of one alpha 2(I) and two alpha 1(I) chains. Interacts with MRC2. Interacts with TRAM2. Interacts with MFAP4 in a Ca (2+)-dependent manner. Contains mostly 4-hydroxyproline. Proline residues at the third position of the tripeptide repeating unit (G-X-Y) are hydroxylated in some or all of the chains. In terms of processing, contains 3-hydroxyproline at a few sites. This modification occurs on the first proline residue in the sequence motif Gly-Pro-Hyp, where Hyp is 4-hydroxyproline. Post-translationally, lysine residues at the third position of the tripeptide repeating unit (G-X-Y) are 5-hydroxylated in some or all of the chains. O-glycosylated on hydroxylated lysine residues. The O-linked glycan consists of a Glc-Gal disaccharide. Forms the fibrils of tendon, ligaments and bones. In bones the fibrils are mineralized with calcium hydroxyapatite.

Its subcellular location is the secreted. It is found in the extracellular space. It localises to the extracellular matrix. Its function is as follows. Type I collagen is a member of group I collagen (fibrillar forming collagen). The protein is Collagen alpha-1(I) chain (Col1a1) of Rattus norvegicus (Rat).